Reading from the N-terminus, the 829-residue chain is Probable beta-glucosidase H (829 aa).

Residue aspartate 225 is part of the active site. The region spanning 389–548 (RMLSNAVIRF…DPEQMVRDAV (160 aa)) is the PA14 domain. Residues asparagine 416, asparagine 431, asparagine 473, asparagine 602, and asparagine 627 are each glycosylated (N-linked (GlcNAc...) asparagine).

It belongs to the glycosyl hydrolase 3 family.

The protein resides in the secreted. It catalyses the reaction Hydrolysis of terminal, non-reducing beta-D-glucosyl residues with release of beta-D-glucose.. The protein operates within glycan metabolism; cellulose degradation. In terms of biological role, beta-glucosidases are one of a number of cellulolytic enzymes involved in the degradation of cellulosic biomass. Catalyzes the last step releasing glucose from the inhibitory cellobiose. The polypeptide is Probable beta-glucosidase H (bglH) (Aspergillus clavatus (strain ATCC 1007 / CBS 513.65 / DSM 816 / NCTC 3887 / NRRL 1 / QM 1276 / 107)).